A 214-amino-acid chain; its full sequence is 3,4-dihydroxy-2-butanone 4-phosphate synthase (214 aa).

D-ribulose 5-phosphate is bound by residues 37–38 (RE), Asp42, 150–154 (RRGHT), and Glu174. Glu38 provides a ligand contact to Mg(2+). A Mg(2+)-binding site is contributed by His153.

It belongs to the DHBP synthase family. As to quaternary structure, homodimer. Mg(2+) is required as a cofactor. Requires Mn(2+) as cofactor.

The catalysed reaction is D-ribulose 5-phosphate = (2S)-2-hydroxy-3-oxobutyl phosphate + formate + H(+). It participates in cofactor biosynthesis; riboflavin biosynthesis; 2-hydroxy-3-oxobutyl phosphate from D-ribulose 5-phosphate: step 1/1. Functionally, catalyzes the conversion of D-ribulose 5-phosphate to formate and 3,4-dihydroxy-2-butanone 4-phosphate. This Pasteurella multocida (strain Pm70) protein is 3,4-dihydroxy-2-butanone 4-phosphate synthase.